The following is a 298-amino-acid chain: Glycine--tRNA ligase alpha subunit (298 aa).

Belongs to the class-II aminoacyl-tRNA synthetase family. Tetramer of two alpha and two beta subunits.

Its subcellular location is the cytoplasm. The catalysed reaction is tRNA(Gly) + glycine + ATP = glycyl-tRNA(Gly) + AMP + diphosphate. This Helicobacter pylori (strain G27) protein is Glycine--tRNA ligase alpha subunit.